The chain runs to 240 residues: Manganese transport system ATP-binding protein MntB (240 aa).

One can recognise an ABC transporter domain in the interval 1-233 (MNIQGLTIAY…KIQFAYGDAP (233 aa)). Residue 33–40 (GPNGAGKS) participates in ATP binding.

The protein belongs to the ABC transporter superfamily.

Its subcellular location is the cell membrane. This protein is probably a component of a manganese permease, a binding protein-dependent, ATP-driven transport system. Probably responsible for energy coupling to the transport system. The polypeptide is Manganese transport system ATP-binding protein MntB (mntB) (Listeria innocua serovar 6a (strain ATCC BAA-680 / CLIP 11262)).